We begin with the raw amino-acid sequence, 390 residues long: MTFRKSNVYLNLVNSYIIDSPQPSSINYWWNMGSLLGLCLVIQILTGIFMAMHYSSNIELAFSSVEHIMRDVQGGWFLRYAHANGASFFFICMYIHMGKALYYGSYRSPRVLLWTIGVIIFILTMATAFLGYCCVYGQMSHWGATVITNLFSAIPFIGKDIVLWLWGGFAVSNPTIQRFFALHYLFPFVIAAVVIMHMMALHIHGSSNPLGITGNMDRLPMHGYFVFKDLITVFVFLIVFSLFVFFSPNTMGHPDNYIPGNPMVTPASIVPEWYLLPFYAILRSIPDKLMGVITMFSAILVLLVLPFTDRSVVRGNSFKVLSKLFFFLFVFNFVLLGQIGAVHVEVPYILMGQISTFLYFAYFLVFIPIISTIENILFYVGSRNNTDDLK.

4 helical membrane passes run 32 to 52, 76 to 98, 113 to 133, and 179 to 199; these read MGSLLGLCLVIQILTGIFMAM, WFLRYAHANGASFFFICMYIHMG, LWTIGVIIFILTMATAFLGYC, and FFALHYLFPFVIAAVVIMHMM. Heme b-binding residues include His-82 and His-96. Heme b is bound by residues His-183 and His-197. His-202 serves as a coordination point for a ubiquinone. Helical transmembrane passes span 225–245, 289–309, 321–341, and 348–368; these read FVFKDLITVFVFLIVFSLFVF, LMGVITMFSAILVLLVLPFTD, LSKLFFFLFVFNFVLLGQIGA, and YILMGQISTFLYFAYFLVFIP.

It belongs to the cytochrome b family. Fungal cytochrome b-c1 complex contains 10 subunits; 3 respiratory subunits, 2 core proteins and 5 low-molecular weight proteins. Cytochrome b-c1 complex is a homodimer. The cofactor is heme b.

The protein resides in the mitochondrion inner membrane. Component of the ubiquinol-cytochrome c reductase complex (complex III or cytochrome b-c1 complex) that is part of the mitochondrial respiratory chain. The b-c1 complex mediates electron transfer from ubiquinol to cytochrome c. Contributes to the generation of a proton gradient across the mitochondrial membrane that is then used for ATP synthesis. This chain is Cytochrome b (COB), found in Naumovozyma castellii (Yeast).